The following is a 660-amino-acid chain: U-box domain-containing protein 13 (660 aa).

A disordered region spans residues 227–252; sequence DDNGEEQKVGVNSRSNGQTSTAASQK. The segment covering 236–250 has biased composition (polar residues); sequence GVNSRSNGQTSTAAS. The region spanning 255 to 329 is the U-box domain; that stretch reads VIPDDFRCPI…AQWCEANDIE (75 aa). ARM repeat units lie at residues 384-423, 425-464, 466-505, 507-546, and 548-587; these read ADNR…NLSI, ENNK…SLSV, DENK…NLCI, QGNK…ILSS, and PEGK…HLCS. Residues 631 to 660 are disordered; the sequence is AEQQKETAVSQPEEEAEPTHPESTTEAADT. The segment covering 651 to 660 has biased composition (polar residues); that stretch reads PESTTEAADT.

In terms of assembly, binds to SD11, SD16, SD17, SD18, SD113, SD129 and SD25. In terms of processing, phosphorylated by SD1-6 and SD1-7.

Its subcellular location is the nucleus. The protein localises to the cytoplasm. It catalyses the reaction S-ubiquitinyl-[E2 ubiquitin-conjugating enzyme]-L-cysteine + [acceptor protein]-L-lysine = [E2 ubiquitin-conjugating enzyme]-L-cysteine + N(6)-ubiquitinyl-[acceptor protein]-L-lysine.. Its pathway is protein modification; protein ubiquitination. Functionally, functions as an E3 ubiquitin ligase. This Arabidopsis thaliana (Mouse-ear cress) protein is U-box domain-containing protein 13 (PUB13).